A 373-amino-acid chain; its full sequence is MEDFIYYNGKKYRKGYTTGTCAAAAAKACVEMILTQEEVSAVQVTTTGGTILEIPVAYQKFSKDKATAAVQKDGGDDIDATHGMWIFVDVDLTDNAEVVLDGGVGIGRATQKGISVAVGEAAINPAPRKNILATVRESLGENRGAKILVYAPEGEERAKRTMNSNLGIIGGISILGTTGIVTPMSDEGWKKSLSMELEMKRNQGLDQIILVPGNYGDDFVQNTLGFSSGNIVSMSNFVGYMLKETQRLAFKKVLMVGHFGKLVKVSAGIFTTYSKDADARAEILVANLALLGAPLSLLQAVEKCNTTEAAGEFIEEAGFTQVYDVIVQKIKARSERFLKFTKPSVEVDVVTFSTERGLLAATKDIDVLREEWR.

This sequence belongs to the CbiD family.

It carries out the reaction Co-precorrin-5B + S-adenosyl-L-methionine = Co-precorrin-6A + S-adenosyl-L-homocysteine. It functions in the pathway cofactor biosynthesis; adenosylcobalamin biosynthesis; cob(II)yrinate a,c-diamide from sirohydrochlorin (anaerobic route): step 6/10. Catalyzes the methylation of C-1 in cobalt-precorrin-5B to form cobalt-precorrin-6A. This is Cobalt-precorrin-5B C(1)-methyltransferase from Listeria monocytogenes serotype 4a (strain HCC23).